The sequence spans 368 residues: F-box only protein 28 (368 aa).

Residues 1–11 show a composition bias toward basic and acidic residues; that stretch reads MAAASEERMAE. A disordered region spans residues 1–56; sequence MAAASEERMAEEGGGGHGDGGSCSAAGSAQRQPPAPPSQAPPPGSQAPAAPALAPD. Gly residues predominate over residues 12 to 21; the sequence is EGGGGHGDGG. The span at 22–32 shows a compositional bias: low complexity; that stretch reads SCSAAGSAQRQ. The span at 33 to 45 shows a compositional bias: pro residues; it reads PPAPPSQAPPPGS. Residues 46-55 show a composition bias toward low complexity; it reads QAPAAPALAP. In terms of domain architecture, F-box spans 61 to 109; the sequence is NNTLVALPIVAIENILSFMSYDEISQLRLVCKRMDLVCQRMLNQGFLKV. A phosphoserine mark is found at Ser235 and Ser242. Thr270 is subject to Phosphothreonine. Residues 328–368 are disordered; that stretch reads MESAVGTSSGSGQSEESPRKRRKATEAIDSLRKSKRLRNRK. A Phosphoserine modification is found at Ser344.

Part of a SCF (SKP1-cullin-F-box) protein ligase complex.

It is found in the chromosome. Its subcellular location is the centromere. It localises to the kinetochore. In terms of biological role, probably recognizes and binds to some phosphorylated proteins and promotes their ubiquitination and degradation. This is F-box only protein 28 (Fbxo28) from Mus musculus (Mouse).